Reading from the N-terminus, the 190-residue chain is Potassium-transporting ATPase KdpC subunit (190 aa).

Residues 10 to 30 traverse the membrane as a helical segment; that stretch reads TFIFLLLITGGVYPLLTTVLG.

Belongs to the KdpC family. As to quaternary structure, the system is composed of three essential subunits: KdpA, KdpB and KdpC.

The protein resides in the cell inner membrane. Functionally, part of the high-affinity ATP-driven potassium transport (or Kdp) system, which catalyzes the hydrolysis of ATP coupled with the electrogenic transport of potassium into the cytoplasm. This subunit acts as a catalytic chaperone that increases the ATP-binding affinity of the ATP-hydrolyzing subunit KdpB by the formation of a transient KdpB/KdpC/ATP ternary complex. In Escherichia coli (strain 55989 / EAEC), this protein is Potassium-transporting ATPase KdpC subunit.